A 397-amino-acid chain; its full sequence is Probable sugar efflux transporter (397 aa).

The next 12 helical transmembrane spans lie at 15–35, 50–70, 81–101, 103–123, 136–156, 169–189, 209–229, 246–266, 275–295, 301–321, 333–353, and 364–384; these read VVTL…PVGL, VGIM…PFML, LICL…AWNF, VLVI…SITA, AQAL…GLPI, TFFA…KLLP, PALM…YTAY, FATV…VVFG, PLIS…LPAA, LAVL…GMQV, VAMA…ALVG, and TIGY…IIIF.

This sequence belongs to the major facilitator superfamily. SotB (TC 2.A.1.2) family.

It localises to the cell inner membrane. Involved in the efflux of sugars. The physiological role may be the reduction of the intracellular concentration of toxic sugars or sugar metabolites. This Citrobacter koseri (strain ATCC BAA-895 / CDC 4225-83 / SGSC4696) protein is Probable sugar efflux transporter.